We begin with the raw amino-acid sequence, 229 residues long: Aldehyde oxidoreductase iron-sulfur-binding subunit PaoA (229 aa).

The interval 1-21 (MSNQGEYPEDNRVGKHEPHDL) is disordered. The segment at residues 1 to 53 (MSNQGEYPEDNRVGKHEPHDLSLTRRDLIKVSAATAATAVVYPHSTLAASVPA) is a signal peptide (tat-type signal). Residues 9–21 (EDNRVGKHEPHDL) show a composition bias toward basic and acidic residues. The 2Fe-2S ferredoxin-type domain occupies 61 to 137 (MPLTLKVNGK…GAEITTIEGL (77 aa)). 9 residues coordinate [2Fe-2S] cluster: Cys-99, Cys-104, Gly-105, Cys-107, Cys-119, Cys-158, Cys-161, Cys-208, and Cys-210.

Heterotrimer composed of PaoA, PaoB and PaoC. Requires [2Fe-2S] cluster as cofactor. Post-translationally, exported by the Tat system. The position of the signal peptide cleavage has not been experimentally proven.

It is found in the periplasm. The catalysed reaction is an aldehyde + A + H2O = a carboxylate + AH2 + H(+). With respect to regulation, the complex requires PaoD for activity. In terms of biological role, oxidizes aldehydes to the corresponding carboxylic acids with a preference for aromatic aldehydes. It might play a role in the detoxification of aldehydes to avoid cell damage. The chain is Aldehyde oxidoreductase iron-sulfur-binding subunit PaoA from Escherichia coli (strain K12).